The chain runs to 170 residues: Phosphopantetheine adenylyltransferase (170 aa).

Thr-14 is a substrate binding site. ATP contacts are provided by residues Thr-14 to Phe-15 and His-22. Substrate is bound by residues Lys-46, Leu-78, and Arg-92. ATP is bound by residues Gly-93 to Arg-95, Glu-103, and Trp-128 to Thr-134.

It belongs to the bacterial CoaD family. As to quaternary structure, homohexamer. It depends on Mg(2+) as a cofactor.

Its subcellular location is the cytoplasm. It catalyses the reaction (R)-4'-phosphopantetheine + ATP + H(+) = 3'-dephospho-CoA + diphosphate. It participates in cofactor biosynthesis; coenzyme A biosynthesis; CoA from (R)-pantothenate: step 4/5. In terms of biological role, reversibly transfers an adenylyl group from ATP to 4'-phosphopantetheine, yielding dephospho-CoA (dPCoA) and pyrophosphate. This is Phosphopantetheine adenylyltransferase from Oleidesulfovibrio alaskensis (strain ATCC BAA-1058 / DSM 17464 / G20) (Desulfovibrio alaskensis).